We begin with the raw amino-acid sequence, 319 residues long: Probable casein kinase II subunit alpha homolog (319 aa).

In terms of domain architecture, Protein kinase spans 37-316 (YQIYQRMGRG…ADECLRHPLF (280 aa)). ATP contacts are provided by residues 43–51 (MGRGKYSEV) and Lys-64. Asp-151 functions as the Proton acceptor in the catalytic mechanism.

Belongs to the protein kinase superfamily. Ser/Thr protein kinase family. CK2 subfamily. As to quaternary structure, tetramer composed of two alpha chains, one beta chain and one beta' chain.

It carries out the reaction L-seryl-[protein] + ATP = O-phospho-L-seryl-[protein] + ADP + H(+). The catalysed reaction is L-threonyl-[protein] + ATP = O-phospho-L-threonyl-[protein] + ADP + H(+). Its function is as follows. Catalytic subunit of a constitutively active serine/threonine-protein kinase complex that phosphorylates a large number of substrates containing acidic residues C-terminal to the phosphorylated serine or threonine. The chain is Probable casein kinase II subunit alpha homolog (CKA1) from Encephalitozoon cuniculi (strain GB-M1) (Microsporidian parasite).